A 117-amino-acid chain; its full sequence is Fluoride-specific ion channel FluC 2 (117 aa).

2 helical membrane-spanning segments follow: residues 1–21 (MISIILVMIGGGFGAITRSAI) and 46–66 (FLIGLNIGLSISISWFPAFFV). 2 residues coordinate Na(+): Gly-71 and Thr-74. The helical transmembrane segment at 95-115 (LFLNYSLLQFIIGFIACYIGY) threads the bilayer.

Belongs to the fluoride channel Fluc/FEX (TC 1.A.43) family.

The protein resides in the cell membrane. The catalysed reaction is fluoride(in) = fluoride(out). Na(+) is not transported, but it plays an essential structural role and its presence is essential for fluoride channel function. Functionally, fluoride-specific ion channel. Important for reducing fluoride concentration in the cell, thus reducing its toxicity. The polypeptide is Fluoride-specific ion channel FluC 2 (Staphylococcus aureus (strain MSSA476)).